Here is a 263-residue protein sequence, read N- to C-terminus: tRNA (guanine-N(7)-)-methyltransferase (263 aa).

The interval 1–39 (MVHHGQMHAQPGVGLRPDTPVASGQLPSTSIRSRRSGIS) is disordered. 4 residues coordinate S-adenosyl-L-methionine: glutamate 82, aspartate 107, asparagine 136, and aspartate 159. Aspartate 159 is a catalytic residue. Substrate is bound by residues lysine 163, aspartate 195, and 232 to 235 (TKYE).

This sequence belongs to the class I-like SAM-binding methyltransferase superfamily. TrmB family.

It carries out the reaction guanosine(46) in tRNA + S-adenosyl-L-methionine = N(7)-methylguanosine(46) in tRNA + S-adenosyl-L-homocysteine. The protein operates within tRNA modification; N(7)-methylguanine-tRNA biosynthesis. Catalyzes the formation of N(7)-methylguanine at position 46 (m7G46) in tRNA. This chain is tRNA (guanine-N(7)-)-methyltransferase, found in Mycobacterium bovis (strain ATCC BAA-935 / AF2122/97).